Consider the following 368-residue polypeptide: Transcription factor TGA7 (368 aa).

Residues 70-82 show a composition bias toward polar residues; that stretch reads HNQIEAEQPSSND. The disordered stretch occupies residues 70 to 89; that stretch reads HNQIEAEQPSSNDNQDDDGR. A bZIP domain is found at 91–151; the sequence is HDKMKRRLAQ…LGPSGSINTG (61 aa). 2 coiled-coil regions span residues 92–142 and 252–285; these read DKMK…QGHL and DQQILEVRNLQQSSQQAEDALSQGIDKLQQSLAE. The basic motif stretch occupies residues 93–113; sequence KMKRRLAQNREAARKSRLRKK. Positions 119–133 are leucine-zipper; that stretch reads LEESRLKLSQLEQEL. Positions 152 to 363 constitute a DOG1 domain; it reads IASFEMEYSH…RALSSLWAAR (212 aa).

The protein belongs to the bZIP family. As to quaternary structure, binds DNA as a dimer. Interacts with NPR1 and NPR4. Interacts with GRXC7/ROXY1.

It is found in the nucleus. In terms of biological role, transcriptional activator that binds specifically to the DNA sequence 5'-TGACG-3'. Recognizes ocs elements like the as-1 motif of the cauliflower mosaic virus 35S promoter. Binding to the as-1-like cis elements mediate auxin- and salicylic acid-inducible transcription. May be involved in the induction of the systemic acquired resistance (SAR) via its interaction with NPR1. The chain is Transcription factor TGA7 (TGA7) from Arabidopsis thaliana (Mouse-ear cress).